A 147-amino-acid polypeptide reads, in one-letter code: Peptide methionine sulfoxide reductase MsrB 2 (147 aa).

A MsrB domain is found at 6-129; it reads TDEEVSKLTP…NSAALRFIPR (124 aa). Catalysis depends on cysteine 118, which acts as the Nucleophile.

This sequence belongs to the MsrB Met sulfoxide reductase family.

The enzyme catalyses L-methionyl-[protein] + [thioredoxin]-disulfide + H2O = L-methionyl-(R)-S-oxide-[protein] + [thioredoxin]-dithiol. This chain is Peptide methionine sulfoxide reductase MsrB 2 (msrB2), found in Rhizobium meliloti (strain 1021) (Ensifer meliloti).